Here is a 335-residue protein sequence, read N- to C-terminus: Methylthioribose-1-phosphate isomerase (335 aa).

Residues 43 to 45, R86, and Q193 contribute to the substrate site; that span reads RGA. The Proton donor role is filled by D234. Substrate is bound at residue 244–245; sequence NK.

The protein belongs to the eIF-2B alpha/beta/delta subunits family. MtnA subfamily.

The catalysed reaction is 5-(methylsulfanyl)-alpha-D-ribose 1-phosphate = 5-(methylsulfanyl)-D-ribulose 1-phosphate. Its pathway is amino-acid biosynthesis; L-methionine biosynthesis via salvage pathway; L-methionine from S-methyl-5-thio-alpha-D-ribose 1-phosphate: step 1/6. Catalyzes the interconversion of methylthioribose-1-phosphate (MTR-1-P) into methylthioribulose-1-phosphate (MTRu-1-P). This is Methylthioribose-1-phosphate isomerase from Parabacteroides distasonis (strain ATCC 8503 / DSM 20701 / CIP 104284 / JCM 5825 / NCTC 11152).